The sequence spans 82 residues: Diphthamide biosynthesis protein 3 (82 aa).

Residues 3-59 enclose the DPH-type MB domain; the sequence is TYDEIEIEDMTFEPENQMFTYPCPCGDRFQIYLDDMFEGEKVAVCPSCSLMIDVVFD. Cys-25, Cys-27, Cys-47, and Cys-50 together coordinate Fe cation. The required for interaction with the elongator complex stretch occupies residues 66–82; that stretch reads YYEEAGIHPPEPIAAAA.

This sequence belongs to the DPH3 family. As to quaternary structure, component of the 2-(3-amino-3-carboxypropyl)histidine synthase complex composed of DPH1, DPH2, KTI11/DPH3 and a NADH-dependent reductase, predominantly CBR1. Interacts with DPH1. Interacts with DPH2. Interacts with CBR1. Interacts with elongation factor 2. Interacts with ATS1/KTI13; the interaction is direct. Interacts with the 40S ribosomal protein RPS7A. Interacts with the 40S ribosomal protein RPS19A. Interacts with the elongator complex subunit IKI3/ELP1. Interacts with the elongator complex subunit ELP2. Interacts with the elongator complex subunit ELP3. Interacts with the elongator complex subunit ELP5.

It localises to the cytoplasm. Its subcellular location is the nucleus. The catalysed reaction is [3Fe-4S](1+)-[protein] + Fe(2+)-[Dph3] = [3Fe-4S](0)-[protein] + Fe(3+)-[Dph3]. It carries out the reaction 2 [3Fe-4S](0)-[protein] + 2 Fe(2+)-[Dph3] + NADH = 2 [4Fe-4S](1+)-[protein] + 2 [Dph3] + NAD(+) + H(+). Its pathway is protein modification; peptidyl-diphthamide biosynthesis. In terms of biological role, required for the first step of diphthamide biosynthesis, a post-translational modification of histidine which occurs in elongation factor 2. DPH1 and DPH2 transfer a 3-amino-3-carboxypropyl (ACP) group from S-adenosyl-L-methionine (SAM) to a histidine residue, the reaction is assisted by a reduction system comprising KTI11/DPH3 and a NADH-dependent reductase, predominantly CBR1. Acts as an electron donor to reduce the Fe-S cluster in DPH1-DPH2 keeping the [4Fe-4S] clusters in the active and reduced state. Restores iron to DPH1-DPH2 iron-sulfur clusters which have degraded from [4Fe-4S] to [3Fe-4S] by donating an iron atom to reform [4Fe-4S] clusters, in a manner dependent on the presence of elongation factor 2 and SAM. Together with ATS1; associates with the elongator complex and is required for tRNA Wobble base modifications mediated by the elongator complex. The elongator complex is required for multiple tRNA modifications, including mcm5U (5-methoxycarbonylmethyl uridine), mcm5s 2U (5-methoxycarbonylmethyl-2-thiouridine), and ncm5U (5-carbamoylmethyl uridine). The sequence is that of Diphthamide biosynthesis protein 3 from Saccharomyces cerevisiae (strain ATCC 204508 / S288c) (Baker's yeast).